The chain runs to 321 residues: MLFATLEHILTHISFSTISIVITIHLITLLVRELGGLRDSSEKGMIATFFCITGFLVSRWASSGHFPLSNLYESLIFLSWALYILHMIPKIQNSKNDLSTITTPSTILTQGFATSGLLTEMHQSTILVPALQSQWLMMHVSMMLLSYATLLCGSLLSAALLMIRFRKNLDFFSKKKKNVLLKTFFFNEIEYFYAKRSALKSTFFPLFPNYYKYQLIERLDSWSYRVISLGFTLLTIGILCGAVWANEAWGSYWNWDPKETWAFITWTIFAIYLHSRTNPNWKGTKSAFVASIGFLIIWICYFGINLLGIGLHSYGSFTLPI.

Transmembrane regions (helical) follow at residues 9–29, 44–64, 68–88, 143–163, 226–246, 260–274, and 289–309; these read ILTH…LITL, GMIA…ASSG, LSNL…LHMI, MLLS…LLMI, VISL…VWAN, TWAF…IYLH, and VASI…LLGI.

This sequence belongs to the CcmF/CycK/Ccl1/NrfE/CcsA family. May interact with Ccs1.

It localises to the plastid. It is found in the chloroplast thylakoid membrane. Functionally, required during biogenesis of c-type cytochromes (cytochrome c6 and cytochrome f) at the step of heme attachment. The polypeptide is Cytochrome c biogenesis protein CcsA (Oryza sativa subsp. indica (Rice)).